The primary structure comprises 281 residues: Sulfur carrier protein FdhD (281 aa).

The active-site Cysteine persulfide intermediate is the Cys117.

The protein belongs to the FdhD family.

The protein resides in the cytoplasm. Required for formate dehydrogenase (FDH) activity. Acts as a sulfur carrier protein that transfers sulfur from IscS to the molybdenum cofactor prior to its insertion into FDH. This Xanthomonas campestris pv. campestris (strain 8004) protein is Sulfur carrier protein FdhD.